The following is a 2441-amino-acid chain: Histone lysine acetyltransferase CREBBP (2441 aa).

Disordered stretches follow at residues Met1 to Asp29 and Leu73 to Ser168. Ala2 is modified (N-acetylalanine). Residues Pro20–Asp29 show a composition bias toward polar residues. Positions Ser79–Ser89 are enriched in low complexity. Ser120 is subject to Phosphoserine. Residues Pro121–Ser168 show a composition bias toward polar residues. Arg219 carries the omega-N-methylarginine modification. Residues Pro226–Ala409 form an interaction with SRCAP region. The span at Gly261–Thr272 shows a compositional bias: low complexity. The interval Gly261 to Val292 is disordered. The segment covering Ser273 to Val292 has biased composition (polar residues). A TAZ-type 1 zinc finger spans residues Asp346–Leu432. Residues His362, Cys366, Cys379, Cys384, His393, Cys397, Cys403, Cys408, His417, Cys421, Cys426, and Cys429 each contribute to the Zn(2+) site. A KIX domain is found at Gly586–Glu665. Asymmetric dimethylarginine is present on residues Arg600 and Arg624. Position 656 is an N6-acetyllysine (Lys656). The span at Phe792–Gly811 shows a compositional bias: polar residues. The interval Phe792–Pro1088 is disordered. Residues Pro846–Ala862 are compositionally biased toward pro residues. The span at Val894 to Ser906 shows a compositional bias: polar residues. Composition is skewed to low complexity over residues Ser909–Gln930 and Pro938–Pro957. Residues Pro974–Pro989 are compositionally biased toward polar residues. Residue Lys999 forms a Glycyl lysine isopeptide (Lys-Gly) (interchain with G-Cter in SUMO1) linkage. Positions Thr1012 to Met1022 are enriched in basic and acidic residues. Residue Lys1015 is modified to N6-acetyllysine. Ser1031 is subject to Phosphoserine. Residues Val1033–Ala1060 show a composition bias toward basic and acidic residues. Residues Lys1034 and Lys1057 each participate in a glycyl lysine isopeptide (Lys-Gly) (interchain with G-Cter in SUMO1) cross-link. A compositionally biased stretch (polar residues) spans Ser1068 to Gln1080. Ser1077 carries the phosphoserine modification. One can recognise a Bromo domain in the interval Phe1086–Val1193. Residues Asp1125–Lys1171 form an interaction with histone region. The interval Asn1163 to Lys1181 is interaction with ASF1A. At Lys1217 the chain carries N6-acetyllysine. In terms of domain architecture, CBP/p300-type HAT spans Lys1324–Gln1701. Phosphoserine; by IKKA is present on residues Ser1383 and Ser1387. The interval Tyr1434 to Asp1436 is interaction with histone. Residues Leu1435–Ser1437, Arg1447–Thr1448, Ile1494, Arg1499, and Trp1503 each bind acetyl-CoA. Over residues Leu1557–Ser1569 the composition is skewed to basic and acidic residues. The segment at Leu1557–Asn1616 is disordered. Residues Lys1584, Lys1592, Lys1593, Lys1596, and Lys1598 each carry the N6-acetyllysine modification. Residues Ala1586–Lys1596 are compositionally biased toward basic residues. Residues Arg1703 to Asp1751 form a ZZ-type zinc finger. 8 residues coordinate Zn(2+): Cys1708, Cys1711, Cys1721, Cys1724, Cys1730, Cys1733, His1739, and His1741. N6-acetyllysine occurs at positions 1742 and 1745. The residue at position 1764 (Ser1764) is a Phosphoserine. The TAZ-type 2 zinc-finger motif lies at Gln1766–Ile1847. A disordered region spans residues Thr1875 to Ala1959. 2 stretches are compositionally biased toward pro residues: residues Pro1901–Ser1913 and Pro1944–Ala1955. Residues Ser2064, Ser2077, and Ser2080 each carry the phosphoserine modification. Positions Asn2112–Ser2421 are disordered. Low complexity predominate over residues Gln2113–Pro2138. Over residues Pro2167–Pro2188 the composition is skewed to polar residues. Low complexity-rich tracts occupy residues Gln2197–Gln2216, Met2260–Gly2279, and Ile2286–Ile2304. Polar residues-rich tracts occupy residues Ser2314 to Ala2326 and Gln2333 to Val2342. The segment covering Val2348–Ser2371 has biased composition (pro residues). Ser2350 is subject to Phosphoserine. The span at Gln2410–Ser2421 shows a compositional bias: polar residues.

In terms of assembly, part of a complex composed of MSX3, CREBBP/CBP AND EP300/p300; the interaction with MSX3 decreases histone acetylation activity. Interacts with DHX9 (via N-terminus); this interaction mediates association with RNA polymerase II holoenzyme and stimulates CREB-dependent transcriptional activation. Interacts (via transactivation domain and C-terminus) with PCNA; the interaction occurs on chromatin in UV-irradiated damaged cells. Found in a complex containing NCOA2; NCOA3; IKKA; IKKB and IKBKG. Probably part of a complex with HIF1A and EP300. The TAZ-type 1 domain interacts with HIF1A. Interacts with SRCAP, ELF3, MLLT7/FOXO4, N4BP2, NCOA6, PCAF, PELP1, PML, SMAD1, SMAD2, SMAD3, SPIB and TRERF1. Interacts with KLF1; the interaction results in acetylation and enhancement of transcriptional activity of KLF1. Interacts with MAFG; the interaction acetylates MAFG in the basic region and stimulates NFE2 transcriptional activity through increasing its DNA-binding activity. Interacts with IRF2; the interaction acetylates IRF2 and regulates its activity on the H4 promoter. Interacts with IRF3 (when phosphorylated); forming the dsRNA-activated factor 1 (DRAF1), a complex which activates the transcription of the type I interferon genes. Interacts (via N-terminus) with SS18L1/CREST (via C-terminus). Interacts with FOXO1; the interaction acetylates FOXO1 and inhibits its transcriptional activity. Interacts with MECOM and MTDH. Interacts with ASF1A and ASF1B; this promotes histone acetylation. Interacts with acetylated TP53/p53 and with the acetylated histones H3 and H4. Interacts with CITED1 (via C-terminus). Interacts with GATA1; the interaction results in acetylation and enhancement of transcriptional activity of GATA1. Interacts with MAF, CARM1. NCOA3, ZCCHC12, DDX17, DDX5 and CITED4 (C-terminal region). Interacts with phosphorylated CREB1. Interacts with DAXX; the interaction is dependent on CBP sumoylation and results in suppression of the transcriptional activity via recruitment of HDAC2 to DAXX. Interacts with NPAS2, CLOCK and BMAL1. Interacts with SMAD4; negatively regulated by ZBTB7A. Forms a complex with KMT2A and CREB1. Interacts with DDX3X; this interaction may facilitate HNF4A acetylation. Interacts with MSX1; the interaction may inhibit MSX1 autoinactivation. Interacts with MSX3. Interacts with ACSS2. Post-translationally, methylation of the KIX domain by CARM1 blocks association with CREB. This results in the blockade of CREB signaling, and in activation of apoptotic response. In terms of processing, phosphorylated by CHUK/IKKA at Ser-1383 and Ser-1387; these phosphorylations promote cell growth by switching the binding preference of CREBBP from TP53 to NF-kappa-B. Sumoylation negatively regulates transcriptional activity via the recruitment of DAAX. Post-translationally, autoacetylation is required for binding to protein substrates, such as acetylated histones and acetylated TP53/p53. Autoacetylation is induced by glucose and fatty acids.

It localises to the cytoplasm. The protein resides in the nucleus. It carries out the reaction L-lysyl-[histone] + acetyl-CoA = N(6)-acetyl-L-lysyl-[histone] + CoA + H(+). The enzyme catalyses L-lysyl-[protein] + acetyl-CoA = N(6)-acetyl-L-lysyl-[protein] + CoA + H(+). It catalyses the reaction (S)-lactoyl-CoA + L-lysyl-[protein] = N(6)-[(S)-lactoyl]-L-lysyl-[protein] + CoA + H(+). Acetylates histones, giving a specific tag for transcriptional activation. Mediates acetylation of histone H3 at 'Lys-18' and 'Lys-27' (H3K18ac and H3K27ac, respectively). Also acetylates non-histone proteins, like DDX21, FBL, IRF2, MAFG, NCOA3, POLR1E/PAF53 and FOXO1. Binds specifically to phosphorylated CREB and enhances its transcriptional activity toward cAMP-responsive genes. Acts as a coactivator of ALX1. Acts as a circadian transcriptional coactivator which enhances the activity of the circadian transcriptional activators: NPAS2-BMAL1 and CLOCK-BMAL1 heterodimers. Acetylates PCNA; acetylation promotes removal of chromatin-bound PCNA and its degradation during nucleotide excision repair (NER). Acetylates POLR1E/PAF53, leading to decreased association of RNA polymerase I with the rDNA promoter region and coding region. Acetylates DDX21, thereby inhibiting DDX21 helicase activity. Acetylates FBL, preventing methylation of 'Gln-105' of histone H2A (H2AQ104me). In addition to protein acetyltransferase, can use different acyl-CoA substrates, such as lactoyl-CoA, and is able to mediate protein lactylation. Catalyzes lactylation of MRE11 in response to DNA damage, thereby promoting DNA double-strand breaks (DSBs) via homologous recombination (HR). Functions as a transcriptional coactivator for SMAD4 in the TGF-beta signaling pathway. This is Histone lysine acetyltransferase CREBBP (Crebbp) from Mus musculus (Mouse).